Reading from the N-terminus, the 164-residue chain is Protein eva-1 homolog B (164 aa).

A helical membrane pass occupies residues 29–49; it reads GLYFVLGVCFGLLLTLCLLVI. The disordered stretch occupies residues 56-110; it reads RSRPRTPAPRRDPRSSTLEPEDEDDEEDEDTMTRLGPDDTLQGQELSTEPDGPLS. Residues 74 to 85 show a composition bias toward acidic residues; the sequence is EPEDEDDEEDED. A phosphothreonine mark is found at T86, T149, and T157.

The protein belongs to the EVA1 family.

Its subcellular location is the membrane. The protein is Protein eva-1 homolog B (Eva1b) of Mus musculus (Mouse).